The chain runs to 226 residues: Large ribosomal subunit protein uL1 (226 aa).

This sequence belongs to the universal ribosomal protein uL1 family. In terms of assembly, part of the 50S ribosomal subunit.

Binds directly to 23S rRNA. The L1 stalk is quite mobile in the ribosome, and is involved in E site tRNA release. Its function is as follows. Protein L1 is also a translational repressor protein, it controls the translation of the L11 operon by binding to its mRNA. This Mycoplasma pneumoniae (strain ATCC 29342 / M129 / Subtype 1) (Mycoplasmoides pneumoniae) protein is Large ribosomal subunit protein uL1.